We begin with the raw amino-acid sequence, 893 residues long: Serine/threonine-protein kinase/endoribonuclease IRE1 (893 aa).

Residues 1–19 (MRSLRRVLLQLVLLAGVAF) form the signal peptide. Residues 20–379 (RGVRFDDAAD…NSVTKFSYRW (360 aa)) are Lumenal-facing. Residues Asn105, Asn158, Asn259, and Asn351 are each glycosylated (N-linked (GlcNAc...) asparagine). The chain crosses the membrane as a helical span at residues 380–397 (LFPTFLMLLIMACLVKLA). At 398 to 893 (DASKYCRQFV…FSKYFLGSSA (496 aa)) the chain is on the cytoplasmic side. Positions 451–478 (ASDKEGNGTGGSTEAQSNKAHDSTNVEL) are disordered. Residues 491 to 759 (CVYSKEIGKG…AVYVMHHPFF (269 aa)) enclose the Protein kinase domain. Residues 497 to 505 (IGKGSNGTV) and Lys519 contribute to the ATP site. Asp625 serves as the catalytic Proton acceptor. The KEN domain occupies 762 to 890 (PELCLSFLRD…EEAFSKYFLG (129 aa)).

The protein belongs to the protein kinase superfamily. Ser/Thr protein kinase family. As to quaternary structure, homodimer; disulfide-linked. Dimer formation is driven by hydrophobic interactions within the N-terminal luminal domains and stabilized by disulfide bridges. In terms of processing, autophosphorylated. In terms of tissue distribution, expressed in roots, nodes, internodes, leaf sheaths, leaf blades, young ears and mature ears.

It is found in the endoplasmic reticulum membrane. The enzyme catalyses L-seryl-[protein] + ATP = O-phospho-L-seryl-[protein] + ADP + H(+). The catalysed reaction is L-threonyl-[protein] + ATP = O-phospho-L-threonyl-[protein] + ADP + H(+). Functionally, involved in endoplasmic reticulum (ER) stress response. Senses unfolded proteins in the lumen of the ER via its N-terminal domain which leads to enzyme auto-activation. The active endoribonuclease domain splices bZIP50 mRNA to generate a new C-terminus, converting it into a potent unfolded-protein response (UPR) transcriptional activator, which then induces transcription of UPR target genes, such as luminal-binding protein (BiP) chaperones. The chain is Serine/threonine-protein kinase/endoribonuclease IRE1 from Oryza sativa subsp. japonica (Rice).